Consider the following 585-residue polypeptide: MHRWSRLFVPTLREAPSDAEVASHKFLLRSGYIRQLGAGIYSYLLFGQRSINKIVGIVREEMDKIGQEFLLPAIHPADLWRESGRWTVMGDNMFRLKDRKGAELCLGMTHEEVMTDIARNELRSYKQLPQIWYQIQNKFRDEPRPRSGLLRVRQFLMKDSYSFDLNQAGLDKSYDLHDAAYRAIFTRCGLNFVVVEADSGAMGGSGSQEFMVYTDAGEDLIASCAKCGYAANMEKATSKLAPVEELAATGDGQPELISTPGQAAIADICKFLGMQPHSDIKCVAYMAEVPSEDGKTSTWEPVAAFLRGDHFVNETKLLAVVGATELRPMQAEELEKWMHGPAGYLGPVGLTPAKKLRDGSLNVVLDLGLEGRRNLVAGANKLDYHYRNVTPGRDFTWTVAADIRNAAEGEGCPVCGEPLKVAKAVEIGHIFKLGTKYTESMGARVLDENGKEVMPVMGCYGIGIERILTASIEQNNDANGFWLPRSIAPFDVVVTITNMADETLRQAGEALAAQLEAAGYDVLLDDREERAGVKFKDADLVGIPYRFNVGKKTLEGKTELVTRATASSQDVALDAAVEALKALTA.

It belongs to the class-II aminoacyl-tRNA synthetase family. ProS type 1 subfamily. In terms of assembly, homodimer.

The protein resides in the cytoplasm. The catalysed reaction is tRNA(Pro) + L-proline + ATP = L-prolyl-tRNA(Pro) + AMP + diphosphate. Its function is as follows. Catalyzes the attachment of proline to tRNA(Pro) in a two-step reaction: proline is first activated by ATP to form Pro-AMP and then transferred to the acceptor end of tRNA(Pro). As ProRS can inadvertently accommodate and process non-cognate amino acids such as alanine and cysteine, to avoid such errors it has two additional distinct editing activities against alanine. One activity is designated as 'pretransfer' editing and involves the tRNA(Pro)-independent hydrolysis of activated Ala-AMP. The other activity is designated 'posttransfer' editing and involves deacylation of mischarged Ala-tRNA(Pro). The misacylated Cys-tRNA(Pro) is not edited by ProRS. In Acidobacterium capsulatum (strain ATCC 51196 / DSM 11244 / BCRC 80197 / JCM 7670 / NBRC 15755 / NCIMB 13165 / 161), this protein is Proline--tRNA ligase.